The sequence spans 524 residues: Probable serine/threonine-protein kinase WNK10 (524 aa).

The Protein kinase domain maps to 16–273 (IRYNDVLGRG…ALELLKDQLL (258 aa)). ATP-binding positions include 96-99 (TELF) and K146. Residue D163 is the Proton acceptor of the active site. S477 carries the post-translational modification Phosphoserine. Positions 480–523 (SNKQSEDLKTELNVIESQYNQSCQRLLRMKEEAIEKAKRKWMKL) form a coiled coil.

The protein belongs to the protein kinase superfamily. Ser/Thr protein kinase family. WNK subfamily.

The enzyme catalyses L-seryl-[protein] + ATP = O-phospho-L-seryl-[protein] + ADP + H(+). The catalysed reaction is L-threonyl-[protein] + ATP = O-phospho-L-threonyl-[protein] + ADP + H(+). Its function is as follows. May regulate flowering time by modulating the photoperiod pathway. This Arabidopsis thaliana (Mouse-ear cress) protein is Probable serine/threonine-protein kinase WNK10 (WNK10).